The sequence spans 453 residues: Tubulin delta chain (453 aa).

143-149 (AGGTGSG) serves as a coordination point for GTP.

This sequence belongs to the tubulin family. As to quaternary structure, found in a complex with TEDC1, TEDC2, TUBE1 and TUBD1.

It localises to the nucleus. It is found in the cytoplasm. The protein localises to the cytoskeleton. The protein resides in the microtubule organizing center. Its subcellular location is the centrosome. It localises to the centriole. It is found in the cell projection. The protein localises to the cilium. In terms of biological role, acts as a positive regulator of hedgehog signaling and regulates ciliary function. This Homo sapiens (Human) protein is Tubulin delta chain (TUBD1).